The sequence spans 836 residues: Envelope glycoprotein gp160 (836 aa).

The signal sequence occupies residues 1–21 (MGMQSGWPFFCLLISLTIGSD). At 22 to 656 (PHWVTVYYGV…ITKWLWYIKI (635 aa)) the chain is on the extracellular side. Cys-43 and Cys-63 are joined by a disulfide. Residues Asn-77, Asn-121, Asn-130, Asn-134, Asn-146, Asn-150, Asn-180, Asn-189, Asn-224, Asn-228, Asn-233, Asn-254, Asn-276, Asn-282, Asn-288, Asn-318, Asn-328, Asn-340, and Asn-341 are each glycosylated (N-linked (GlcNAc...) asparagine; by host). Disulfide bonds link Cys-108–Cys-197, Cys-115–Cys-188, Cys-120–Cys-147, Cys-210–Cys-239, and Cys-220–Cys-231. Residues 120–146 (CNNSNGNSAGNSTTNRTEDLEDRQMKN) form a V1 region. A V2 region spans residues 147 to 188 (CSFNITTEIRDRKKQVYSLFYVEDVVPIKDGTDNNTYRLINC). A V3 region spans residues 283-316 (CTRPGNNTGGQVQIGPAMTFYNIEKIVGDVRQAY). A disulfide bridge connects residues Cys-283 and Cys-317. A CD4-binding loop region spans residues 349–359 (KNGGDLEVTHL). Cystine bridges form between Cys-363/Cys-418 and Cys-370/Cys-391. A V4 region spans residues 370–391 (CNTSRLFNESENKTNKTIILPC). 6 N-linked (GlcNAc...) asparagine; by host glycosylation sites follow: Asn-371, Asn-377, Asn-381, Asn-384, Asn-415, and Asn-435. The V5 stretch occupies residues 434-441 (GNKTVYPS). Residues 482 to 503 (AAFGLGALFLGFLGAAGSTMGA) are fusion peptide. Positions 545 to 563 (KQLRAKVLAIERYLRDQQI) are immunosuppression. Cys-569 and Cys-575 form a disulfide bridge. Asn-582, Asn-588, Asn-597, and Asn-609 each carry an N-linked (GlcNAc...) asparagine; by host glycan. Positions 605 to 639 (RKVRNYSGVIFDLIEQAQEQQNTNEKALLELDQWA) form a coiled coil. The segment at 634–655 (ELDQWASLWNWFDITKWLWYIK) is MPER; binding to GalCer. The helical transmembrane segment at 657-677 (AIMVVAGIIGIRIISAIITII) threads the bilayer. At 678–836 (ARVRQGYSPL…IRQGLERALL (159 aa)) the chain is on the cytoplasmic side. The short motif at 684–687 (YSPL) is the YXXL motif; contains endocytosis signal element. The tract at residues 696–715 (AARGPDRPEETEEGVGGQDR) is disordered. The short motif at 835–836 (LL) is the Di-leucine internalization motif element.

It belongs to the HIV-1 env protein family. In terms of assembly, the mature envelope protein (Env) consists of a homotrimer of non-covalently associated gp120-gp41 heterodimers. The resulting complex protrudes from the virus surface as a spike. There seems to be as few as 10 spikes on the average virion. Interacts with host CD4, CCR5 and CXCR4. Gp120 also interacts with the C-type lectins CD209/DC-SIGN and CLEC4M/DC-SIGNR (collectively referred to as DC-SIGN(R)). Gp120 and gp41 interact with GalCer. Gp120 interacts with host ITGA4/ITGB7 complex; on CD4+ T-cells, this interaction results in rapid activation of integrin ITGAL/LFA-1, which facilitates efficient cell-to-cell spreading of HIV-1. Gp120 interacts with cell-associated heparan sulfate; this interaction increases virus infectivity on permissive cells and may be involved in infection of CD4- cells. The mature envelope protein (Env) consists of a homotrimer of non-covalently associated gp120-gp41 heterodimers. The resulting complex protrudes from the virus surface as a spike. There seems to be as few as 10 spikes on the average virion. Post-translationally, highly glycosylated by host. The high number of glycan on the protein is reffered to as 'glycan shield' because it contributes to hide protein sequence from adaptive immune system. Palmitoylation of the transmembrane protein and of Env polyprotein (prior to its proteolytic cleavage) is essential for their association with host cell membrane lipid rafts. Palmitoylation is therefore required for envelope trafficking to classical lipid rafts, but not for viral replication. In terms of processing, specific enzymatic cleavages in vivo yield mature proteins. Envelope glycoproteins are synthesized as an inactive precursor that is heavily N-glycosylated and processed likely by host cell furin in the Golgi to yield the mature SU and TM proteins. The cleavage site between SU and TM requires the minimal sequence [KR]-X-[KR]-R. About 2 of the 9 disulfide bonds of gp41 are reduced by P4HB/PDI, following binding to CD4 receptor.

It is found in the virion membrane. The protein localises to the host cell membrane. The protein resides in the host endosome membrane. Oligomerizes in the host endoplasmic reticulum into predominantly trimers. In a second time, gp160 transits in the host Golgi, where glycosylation is completed. The precursor is then proteolytically cleaved in the trans-Golgi and thereby activated by cellular furin or furin-like proteases to produce gp120 and gp41. In terms of biological role, attaches the virus to the host lymphoid cell by binding to the primary receptor CD4. This interaction induces a structural rearrangement creating a high affinity binding site for a chemokine coreceptor like CXCR4 and/or CCR5. Acts as a ligand for CD209/DC-SIGN and CLEC4M/DC-SIGNR, which are respectively found on dendritic cells (DCs), and on endothelial cells of liver sinusoids and lymph node sinuses. These interactions allow capture of viral particles at mucosal surfaces by these cells and subsequent transmission to permissive cells. HIV subverts the migration properties of dendritic cells to gain access to CD4+ T-cells in lymph nodes. Virus transmission to permissive T-cells occurs either in trans (without DCs infection, through viral capture and transmission), or in cis (following DCs productive infection, through the usual CD4-gp120 interaction), thereby inducing a robust infection. In trans infection, bound virions remain infectious over days and it is proposed that they are not degraded, but protected in non-lysosomal acidic organelles within the DCs close to the cell membrane thus contributing to the viral infectious potential during DCs' migration from the periphery to the lymphoid tissues. On arrival at lymphoid tissues, intact virions recycle back to DCs' cell surface allowing virus transmission to CD4+ T-cells. Functionally, acts as a class I viral fusion protein. Under the current model, the protein has at least 3 conformational states: pre-fusion native state, pre-hairpin intermediate state, and post-fusion hairpin state. During fusion of viral and target intracellular membranes, the coiled coil regions (heptad repeats) assume a trimer-of-hairpins structure, positioning the fusion peptide in close proximity to the C-terminal region of the ectodomain. The formation of this structure appears to drive apposition and subsequent fusion of viral and target cell membranes. Complete fusion occurs in host cell endosomes and is dynamin-dependent, however some lipid transfer might occur at the plasma membrane. The virus undergoes clathrin-dependent internalization long before endosomal fusion, thus minimizing the surface exposure of conserved viral epitopes during fusion and reducing the efficacy of inhibitors targeting these epitopes. Membranes fusion leads to delivery of the nucleocapsid into the cytoplasm. This chain is Envelope glycoprotein gp160, found in Human immunodeficiency virus type 1 group N (isolate YBF106) (HIV-1).